The primary structure comprises 545 residues: Endo-beta-N-acetylglucosaminidase (545 aa).

Positions 1–36 (MTFIKQMMPRYVASMTAGIVAAAMAATCAFAPVANA) are cleaved as a signal peptide. The region spanning 51 to 333 (RHFMVYYRAW…EDLRRIVPSN (283 aa)) is the GH18 domain. Glutamate 184 serves as the catalytic Proton donor. A disordered region spans residues 486–511 (PVPTPDSTDQNGNRDKVTNHKVQGQP). Residues 518 to 538 (GISTDIIVAVGVTLAIAGVAL) form a helical membrane-spanning segment.

It belongs to the glycosyl hydrolase 18 family.

The protein resides in the cell membrane. It catalyses the reaction an N(4)-(oligosaccharide-(1-&gt;3)-[oligosaccharide-(1-&gt;6)]-beta-D-Man-(1-&gt;4)-beta-D-GlcNAc-(1-&gt;4)-alpha-D-GlcNAc)-L-asparaginyl-[protein] + H2O = an oligosaccharide-(1-&gt;3)-[oligosaccharide-(1-&gt;6)]-beta-D-Man-(1-&gt;4)-D-GlcNAc + N(4)-(N-acetyl-beta-D-glucosaminyl)-L-asparaginyl-[protein]. Endoglycosidase with broad specificity that cleaves the chitobiose core of high mannose and complex N-linked glycans. Is able to release N-glycans from diverse host glycoproteins such as human and bovine lactoferrin, immunoglobulins A and G, and ribonuclease B. Is active directly on human breast milk - a complex matrix of lipids, oligosaccharides, and proteins with disparate glycosylation types - successfully removing a significant proportion of the total amount of N-glycans. Does not recognize O-linked glycans or free human milk oligosaccharides (HMO). This Bifidobacterium longum subsp. infantis (strain ATCC 15697 / DSM 20088 / JCM 1222 / NCTC 11817 / S12) protein is Endo-beta-N-acetylglucosaminidase.